We begin with the raw amino-acid sequence, 490 residues long: Apocarotenoid-15,15'-oxygenase (490 aa).

Histidine 183 is a Fe cation binding site. Residue serine 206 participates in substrate binding. Histidine 238 lines the Fe cation pocket. A substrate-binding site is contributed by phenylalanine 303. Positions 304 and 484 each coordinate Fe cation.

This sequence belongs to the carotenoid oxygenase family. The cofactor is Fe(2+).

It catalyses the reaction all-trans-8'-apo-beta-carotenal + O2 = (2E,4E,6E)-2,6-dimethylocta-2,4,6-trienedial + all-trans-retinal. Cleaves a number of carotenals and carotenols in the all-trans configuration at the 15-15' double bond producing retinal or retinol, respectively. Also shows activity toward lycopenals and the corresponding alcohols. Does not cleave beta-carotene or lycopene. The chain is Apocarotenoid-15,15'-oxygenase from Synechocystis sp. (strain ATCC 27184 / PCC 6803 / Kazusa).